Consider the following 317-residue polypeptide: Olfactory receptor 6P1 (317 aa).

The Extracellular segment spans residues 1–25; that stretch reads MRNLSGGHVEEFVLVGFPTTPPLQL. A glycan (N-linked (GlcNAc...) asparagine) is linked at Asn3. A helical membrane pass occupies residues 26-46; the sequence is LLFVLFFAIYLLTLLENALIV. At 47–54 the chain is on the cytoplasmic side; the sequence is FTIWLAPS. The chain crosses the membrane as a helical span at residues 55 to 75; it reads LHRPMYFFLGHLSFLELWYIN. Topologically, residues 76 to 99 are extracellular; the sequence is VTIPRLLAAFLTQDGRVSYVGCMT. An intrachain disulfide couples Cys97 to Cys189. A helical transmembrane segment spans residues 100-120; that stretch reads QLYFFIALACTECVLLAVMAY. The Cytoplasmic portion of the chain corresponds to 121–139; it reads DRYLAICGPLLYPSLMPSS. The chain crosses the membrane as a helical span at residues 140–160; sequence LATRLAAASWGSGFFSSMMKL. Residues 161–197 lie on the Extracellular side of the membrane; sequence LFISQLSYCGPNIINHFFCDISPLLNLTCSDKEQAEL. N-linked (GlcNAc...) asparagine glycosylation occurs at Asn186. The helical transmembrane segment at 198 to 217 threads the bilayer; sequence VDFLLALVMILLPLLAVVSS. At 218 to 237 the chain is on the cytoplasmic side; that stretch reads YTAIIAAILRIPTSRGRHKA. The chain crosses the membrane as a helical span at residues 238 to 258; the sequence is FSTCAAHLAVVVIYYSSTLFT. At 259-271 the chain is on the extracellular side; it reads YARPRAMYTFNHN. The chain crosses the membrane as a helical span at residues 272–292; it reads KIISVLYTIIVPFFNPAIYCL. At 293–317 the chain is on the cytoplasmic side; it reads RNKEVKEAFRKTVMGRCHYPRDVQD.

This sequence belongs to the G-protein coupled receptor 1 family.

The protein resides in the cell membrane. Its function is as follows. Odorant receptor. This chain is Olfactory receptor 6P1 (OR6P1), found in Homo sapiens (Human).